The sequence spans 476 residues: MLTIFIVTATLFAILYLYFTRNFNYWKDRNVVGPEPTVFFGNIMESVIRRKHLIMIYKDIYEAFPKEKVVGIYRMTTPCLLLRDLDVIKHVMIKDFDLFNDRGVEFSEEGLGLNIFHADGDRWRVLRQCFTPLFTSGKLKNMLNLMSDRGDKFIKMVEKICDKEPEQQIIPLVRKFTMASITTCAFGMELDEEMIETLDKLDSLIFTTSYGNEIDMMYPGILKKLNSSLFSKMIAPFFDNLTKTIIEQRGGKPTNRKDLMDLILELRQKKAIEPMKKTHDEQVTTLELTDSVIAAQTFIFYAAGYETSASTMSFLLFELAENPDIQEKVIAEVDETLKRHNGEITYDTLSEMTYLTQVFHETLRKYPVADILLRNAKADYAVPGTNVTLKKGQTVVVSGFGIHYDPKYYPDPEKFDPERFSPENVRNRHPCAYIPFGAGQRKCLGMRFGQWQVQVCIIKLLSKFRFEPSTKTMSEF.

Cys-443 is a heme binding site.

It belongs to the cytochrome P450 family. Heme serves as cofactor.

It is found in the endoplasmic reticulum membrane. It localises to the microsome membrane. It catalyses the reaction an organic molecule + reduced [NADPH--hemoprotein reductase] + O2 = an alcohol + oxidized [NADPH--hemoprotein reductase] + H2O + H(+). Its function is as follows. Enables the insect to feed on furanocoumarin-producing plants and evolved as an adaptation for detoxification of xanthotoxin and other furanocoumarins. The chain is Cytochrome P450 6B5 (CYP6B5) from Papilio glaucus (Eastern tiger swallowtail butterfly).